Consider the following 228-residue polypeptide: MSGRSSRRGSFSLRQPPVVDIGCNCRRPKLFSIFSSSSSSSFRRGGSKPKSPNASSTSTTTAFTATTGGAGTATSTDSSWGPASFTTNSLFEEPAAAQQEQEQLETRRRRRQQRRRRRRAGATSFARGGDVGGHDDEQQQLQEQAPYRRVAKESVAVAVESAEPYEDFRESMVQMVVEKEIYAWDDLNDLLHQFLSLNSPRHHPLILHAFADLWTRNGLFSPPSPCQF.

3 stretches are compositionally biased toward low complexity: residues 1–14, 54–79, and 92–101; these read MSGR…FSLR, ASST…TDSS, and EEPAAAQQEQ. 2 disordered regions span residues 1–21 and 36–143; these read MSGR…VVDI and SSSS…QLQE. The span at 107 to 120 shows a compositional bias: basic residues; the sequence is RRRRRQQRRRRRRA. Residues 157–216 form the OVATE domain; the sequence is VAVESAEPYEDFRESMVQMVVEKEIYAWDDLNDLLHQFLSLNSPRHHPLILHAFADLWTR.

Interacts with GSK2. In terms of processing, phosphorylated on serine and threonine residues by GSK2. Dephosphorylated during response to brassinosteroid. In terms of tissue distribution, expressed in roots, stems, stem nodes, young leaves, leaf sheaths, lamina joints, young spikelets, inflorescences, stamens and ovaries, embryos and seeds.

The protein resides in the nucleus. Its subcellular location is the cytoplasm. Functionally, probable transcriptional repressor that regulates multiple aspects of plant growth and development, partly through brassinosteroid (BR) signaling pathway. Acts downstream of the kinase GSK2, a negative regulator of BR signaling. The sequence is that of Transcription repressor OFP8 from Oryza sativa subsp. japonica (Rice).